A 342-amino-acid polypeptide reads, in one-letter code: Holliday junction branch migration complex subunit RuvB (342 aa).

The interval 1 to 179 (MTNILSPEKS…FGIPMRLNFY (179 aa)) is large ATPase domain (RuvB-L). ATP contacts are provided by residues Ile18, Arg19, Gly60, Lys63, Thr64, Thr65, 126–128 (EDF), Arg169, Tyr179, and Arg216. Thr64 lines the Mg(2+) pocket. The segment at 180–250 (NTEELKKVLN…ISDFGLKRLE (71 aa)) is small ATPAse domain (RuvB-S). Residues 253 to 342 (RIGLDSNDYR…HQFNIFNENE (90 aa)) are head domain (RuvB-H). DNA contacts are provided by Arg289, Arg308, and Arg313.

The protein belongs to the RuvB family. As to quaternary structure, homohexamer. Forms an RuvA(8)-RuvB(12)-Holliday junction (HJ) complex. HJ DNA is sandwiched between 2 RuvA tetramers; dsDNA enters through RuvA and exits via RuvB. An RuvB hexamer assembles on each DNA strand where it exits the tetramer. Each RuvB hexamer is contacted by two RuvA subunits (via domain III) on 2 adjacent RuvB subunits; this complex drives branch migration. In the full resolvosome a probable DNA-RuvA(4)-RuvB(12)-RuvC(2) complex forms which resolves the HJ.

It is found in the cytoplasm. The enzyme catalyses ATP + H2O = ADP + phosphate + H(+). Its function is as follows. The RuvA-RuvB-RuvC complex processes Holliday junction (HJ) DNA during genetic recombination and DNA repair, while the RuvA-RuvB complex plays an important role in the rescue of blocked DNA replication forks via replication fork reversal (RFR). RuvA specifically binds to HJ cruciform DNA, conferring on it an open structure. The RuvB hexamer acts as an ATP-dependent pump, pulling dsDNA into and through the RuvAB complex. RuvB forms 2 homohexamers on either side of HJ DNA bound by 1 or 2 RuvA tetramers; 4 subunits per hexamer contact DNA at a time. Coordinated motions by a converter formed by DNA-disengaged RuvB subunits stimulates ATP hydrolysis and nucleotide exchange. Immobilization of the converter enables RuvB to convert the ATP-contained energy into a lever motion, pulling 2 nucleotides of DNA out of the RuvA tetramer per ATP hydrolyzed, thus driving DNA branch migration. The RuvB motors rotate together with the DNA substrate, which together with the progressing nucleotide cycle form the mechanistic basis for DNA recombination by continuous HJ branch migration. Branch migration allows RuvC to scan DNA until it finds its consensus sequence, where it cleaves and resolves cruciform DNA. The sequence is that of Holliday junction branch migration complex subunit RuvB from Rickettsia peacockii (strain Rustic).